The sequence spans 163 residues: Choriogonadotropin subunit beta variant 2 (163 aa).

The N-terminal stretch at 1 to 18 (MSKGLLLLLLLSMGGTWA) is a signal peptide. 6 disulfides stabilise this stretch: cysteine 27–cysteine 75, cysteine 41–cysteine 90, cysteine 44–cysteine 128, cysteine 52–cysteine 106, cysteine 56–cysteine 108, and cysteine 111–cysteine 118. 2 N-linked (GlcNAc...) asparagine glycosylation sites follow: asparagine 31 and asparagine 48. Residues 129–163 (DDPRFQASSSSKAPPPSLPSPSRLPGPSDTPILPQ) form a disordered region. Positions 141 to 152 (APPPSLPSPSRL) are enriched in pro residues.

It belongs to the glycoprotein hormones subunit beta family. Expressed in placenta, testis and pituitary.

It is found in the secreted. This chain is Choriogonadotropin subunit beta variant 2 (CGB2), found in Homo sapiens (Human).